We begin with the raw amino-acid sequence, 261 residues long: tRNA 5-carboxymethoxyuridine methyltransferase (261 aa).

Residues R26, G52–G53, D73, A102–Q103, and H119 each bind S-adenosyl-L-methionine.

This sequence belongs to the class I-like SAM-binding methyltransferase superfamily. CmoM family. As to quaternary structure, homodimer.

It carries out the reaction 5-carboxymethoxyuridine(34) in tRNA + S-adenosyl-L-methionine = 5-methoxycarbonylmethoxyuridine(34) in tRNA + S-adenosyl-L-homocysteine. Its function is as follows. Catalyzes the methylation of 5-carboxymethoxyuridine (cmo5U) to form 5-methoxycarbonylmethoxyuridine (mcmo5U) at position 34 in tRNAs. The sequence is that of tRNA 5-carboxymethoxyuridine methyltransferase from Escherichia coli O157:H7.